The chain runs to 475 residues: MENAMSKTLYDKHIDSHTIKELDNEGNVLLYIDRTILNEYTSPQAFSGLREENRDVWNKKSILLNVDHVNPTRPVRDANMTDPGGTLQVNYFRENSKLFDIELFDVTDPRQGIEHVVAHEQGLALPGMVIAAGDSHTTTYGAFGAFGFGIGTSEIEHLLATQTLVYKKLKNMRVTLTGKLPFGTTAKDVIMALVAKIGADGATNYAIEFCGEVIDELSVEGRMTICNMAVECGARGAFMAPDEKVYEYIKGTPRAPKGEMWDLAIAEWRKLKSDNDAVFDKEIHMDCSDLEPFVTWGISPDQADVISGEVPDPNLLPEGQKRKDYQAALEYMGLEPGMKFEEIKISHAFIGSCTNGRIEDLREVAKVLKGRKIAQGVRGMIIPGSTQVRARAEAEGLAKIFIDAGFEWRQSGCSMCLAMNEDVLSPGDRCASGTNRNFAGRQGAGSRTHLMSPAMVAAAAVAGHLVDVRKFVEGD.

Positions 353, 413, and 416 each coordinate [4Fe-4S] cluster.

The protein belongs to the aconitase/IPM isomerase family. LeuC type 1 subfamily. Heterodimer of LeuC and LeuD. [4Fe-4S] cluster serves as cofactor.

It carries out the reaction (2R,3S)-3-isopropylmalate = (2S)-2-isopropylmalate. It functions in the pathway amino-acid biosynthesis; L-leucine biosynthesis; L-leucine from 3-methyl-2-oxobutanoate: step 2/4. Catalyzes the isomerization between 2-isopropylmalate and 3-isopropylmalate, via the formation of 2-isopropylmaleate. In Mannheimia succiniciproducens (strain KCTC 0769BP / MBEL55E), this protein is 3-isopropylmalate dehydratase large subunit 1.